A 212-amino-acid chain; its full sequence is 2-hydroxychromene-2-carboxylate isomerase (212 aa).

Ser24 functions as the Nucleophile in the catalytic mechanism. Residue Ser24 participates in glutathione binding. Residues Lys56, 66–67 (NR), and Tyr97 contribute to the substrate site. Glutathione contacts are provided by residues Val181 and 192 to 195 (WGND).

Belongs to the GST superfamily. NadH family. Requires glutathione as cofactor.

The catalysed reaction is 2-hydroxychromene-2-carboxylate = (3E)-4-(2-hydroxyphenyl)-2-oxobut-3-enoate. It functions in the pathway aromatic compound metabolism; naphthalene degradation. Functionally, involved in the naphthalene catabolic pathway. Catalyzes the reversible glutathione-dependent isomerization of 2-hydroxychromene-2-carboxylate (HCCA) to trans-O-hydroxybenzylidenepyruvate (THBPA). The chain is 2-hydroxychromene-2-carboxylate isomerase (doxJ) from Pseudomonas sp. (strain C18).